The sequence spans 175 residues: Dof zinc finger protein DOF1.5 (175 aa).

The disordered stretch occupies residues 29-57 (EEQQQQQQPELQATTAVRSPSSDLTAEKR). Residues 37–52 (PELQATTAVRSPSSDL) are compositionally biased toward polar residues. The Dof-type zinc finger occupies 62–116 (IPCPRCKSMETKFCYFNNYNVNQPRHFCKGCQRYWTAGGALRNVPVGAGRRKSKP). The Zn(2+) site is built by C64, C67, C89, and C92. Residues 162–168 (PVKRLRC) carry the Nuclear localization signal motif.

Its subcellular location is the nucleus. Functionally, transcription factor that binds specifically to a 5'-AA[AG]G-3' consensus core sequence. Acts as a negative regulator in the phytochrome-mediated light responses. Controls phyB-mediated end-of-day response and the phyA-mediated anthocyanin accumulation. Not involved in direct flowering time regulation. The sequence is that of Dof zinc finger protein DOF1.5 (DOF1.5) from Arabidopsis thaliana (Mouse-ear cress).